A 320-amino-acid chain; its full sequence is Glucosaminate ammonia-lyase (320 aa).

36–43 (TGMQAGGQ) lines the FAD pocket. Residues cysteine 136 and cysteine 139 are joined by a disulfide bond. 285 to 294 (DVADHVYRQA) provides a ligand contact to FAD.

Belongs to the class-II pyridine nucleotide-disulfide oxidoreductase family.

The enzyme catalyses 2-amino-2-deoxy-D-gluconate = 2-dehydro-3-deoxy-D-gluconate + NH4(+). Catalyzes the conversion of 2-amino-2-deoxy-D-gluconate (GlcNA) to 2-keto-3-deoxy-D-gluconic acid (KDGA) and ammonia. This chain is Glucosaminate ammonia-lyase, found in Pseudomonas fluorescens.